Here is a 131-residue protein sequence, read N- to C-terminus: Holo-[acyl-carrier-protein] synthase (131 aa).

Mg(2+) contacts are provided by D8 and E59.

Belongs to the P-Pant transferase superfamily. AcpS family. Mg(2+) is required as a cofactor.

The protein resides in the cytoplasm. The catalysed reaction is apo-[ACP] + CoA = holo-[ACP] + adenosine 3',5'-bisphosphate + H(+). Transfers the 4'-phosphopantetheine moiety from coenzyme A to a Ser of acyl-carrier-protein. This Orientia tsutsugamushi (strain Boryong) (Rickettsia tsutsugamushi) protein is Holo-[acyl-carrier-protein] synthase.